A 58-amino-acid chain; its full sequence is Ranakinin-N (58 aa).

The N-terminal stretch at Met1–Cys22 is a signal peptide. A propeptide spanning residues Glu23 to Lys43 is cleaved from the precursor. The disordered stretch occupies residues Lys25–Pro58. The segment covering Gly35–Glu46 has biased composition (basic and acidic residues).

In terms of tissue distribution, expressed by the skin glands.

Its subcellular location is the secreted. Functionally, induces contraction of intestinal smooth muscle in isolated guinea pig ileum. May induce relaxation of arterial smooth muscle. May target bradykinin receptors (BDKRB). Lacks antibacterial activity against the Gram-positive bacterium S.aureus and the Gram-negative bacteria E.coli and B.dysenteria, and antifungal activity against C.albicans. The sequence is that of Ranakinin-N from Hylarana nigrovittata (Black-striped frog).